A 302-amino-acid chain; its full sequence is uncharacterized protein (302 aa).

A run of 10 helical transmembrane segments spans residues 13–32, 42–64, 77–96, 106–125, 132–150, 154–171, 183–202, 217–239, 246–265, and 275–297; these read GILL…IYFK, ILSH…GRRW, FWLL…IFIW, ASLG…MLFL, LQWF…QLVV, VPIV…YGLL, LFLE…IWLA, NLLL…GAAA, LGFF…VLVY, and ITFA…AGHA. The 128-residue stretch at 22–149 folds into the EamA domain; sequence TMWGIAPIYF…AAIGVGIQLV (128 aa).

Belongs to the EamA transporter family.

Its subcellular location is the cell membrane. This is an uncharacterized protein from Vibrio cholerae serotype O1 (strain ATCC 39315 / El Tor Inaba N16961).